The chain runs to 98 residues: MIPDPRDVILRPVVSEKSYGLLDENVYTFIVRPDANKTQIKLAVQQIFNVRVLRVNTINRQGKRKRTKHGWGHRSASKRALVSLAPGDTIEIFGGPGA.

It belongs to the universal ribosomal protein uL23 family. As to quaternary structure, part of the 50S ribosomal subunit. Contacts protein L29, and trigger factor when it is bound to the ribosome.

In terms of biological role, one of the early assembly proteins it binds 23S rRNA. One of the proteins that surrounds the polypeptide exit tunnel on the outside of the ribosome. Forms the main docking site for trigger factor binding to the ribosome. The protein is Large ribosomal subunit protein uL23 of Frankia casuarinae (strain DSM 45818 / CECT 9043 / HFP020203 / CcI3).